A 545-amino-acid polypeptide reads, in one-letter code: CTP synthase (545 aa).

An amidoligase domain region spans residues 2 to 266; the sequence is TTNYIFVTGG…DDYICKRFSL (265 aa). S14 provides a ligand contact to CTP. S14 lines the UTP pocket. Residues 15–20 and D72 each bind ATP; that span reads SLGKGI. Mg(2+)-binding residues include D72 and E140. CTP contacts are provided by residues 147–149, 187–192, and K223; these read DIE and KTKPTQ. Residues 187–192 and K223 each bind UTP; that span reads KTKPTQ. 239–241 contributes to the ATP binding site; it reads KDV. In terms of domain architecture, Glutamine amidotransferase type-1 spans 291 to 542; sequence TIGMVGKYIE…VKAANEHQKR (252 aa). G352 serves as a coordination point for L-glutamine. C379 (nucleophile; for glutamine hydrolysis) is an active-site residue. Residues 380–383, E403, and R470 each bind L-glutamine; that span reads LGMQ. Active-site residues include H515 and E517.

The protein belongs to the CTP synthase family. In terms of assembly, homotetramer.

The enzyme catalyses UTP + L-glutamine + ATP + H2O = CTP + L-glutamate + ADP + phosphate + 2 H(+). It catalyses the reaction L-glutamine + H2O = L-glutamate + NH4(+). It carries out the reaction UTP + NH4(+) + ATP = CTP + ADP + phosphate + 2 H(+). It participates in pyrimidine metabolism; CTP biosynthesis via de novo pathway; CTP from UDP: step 2/2. Its activity is regulated as follows. Allosterically activated by GTP, when glutamine is the substrate; GTP has no effect on the reaction when ammonia is the substrate. The allosteric effector GTP functions by stabilizing the protein conformation that binds the tetrahedral intermediate(s) formed during glutamine hydrolysis. Inhibited by the product CTP, via allosteric rather than competitive inhibition. Catalyzes the ATP-dependent amination of UTP to CTP with either L-glutamine or ammonia as the source of nitrogen. Regulates intracellular CTP levels through interactions with the four ribonucleotide triphosphates. This chain is CTP synthase, found in Salmonella typhi.